A 1217-amino-acid chain; its full sequence is Disease resistance protein RPS4 (1217 aa).

In terms of domain architecture, TIR spans 14–175 (PQHQVFINFR…EIVKAVKTAL (162 aa)). Glutamate 88 is a catalytic residue. The NB-ARC domain maps to 211 to 472 (EQRLKDLEEK…FRSQDKDYVE (262 aa)). 11 LRR repeats span residues 260 to 285 (HALIDQIRVKSKHLELDRLPQMLLGE), 436 to 459 (PNIVSVFQVSYDELTTAQKDAFLD), 614 to 636 (LKEVRCLHWLKFPLETLPNDFNP), 637 to 659 (INLVDLKLPYSEMEQLWEGDKDT), 682 to 706 (AEKLQRLNLEGCTTLKAFPHDMKKM), 708 to 728 (MLAFLNLKGCTSLESLPEMNL), 729 to 749 (ISLKTLTLSGCSTFKEFPLIS), 750 to 774 (DNIETLYLDGTAISQLPMNMEKLQR), 796 to 818 (LKALQELILSDCLNLKIFPEIDI), 819 to 842 (SFLNILLLDGTAIEVMPQLPSVQY), and 861 to 887 (LSQLKWLDLKYCTSLTSVPEFPPNLQC). The interval 1162–1195 (TEGVDGRVKKKKKTRMDNGRPKKKQRSGRDDNQT) is disordered. A Nuclear localization signal motif is present at residues 1170 to 1177 (KKKKKTRM).

As to quaternary structure, interacts with EDS1.

The protein resides in the nucleus. It catalyses the reaction NAD(+) + H2O = ADP-D-ribose + nicotinamide + H(+). Functionally, disease resistance (R) protein that specifically recognizes the AvrRps4 type III effector avirulence protein from Pseudomonas syringae. Resistance proteins guard the plant against pathogens that contain an appropriate avirulence protein via an indirect interaction with this avirulence protein. That triggers a defense system including the hypersensitive response, which restricts the pathogen growth. The combined presence of both regular and alternative RPS4 transcripts with truncated open reading frames (ORFs) is necessary for function. RPS4 function is regulated at multiple levels, including gene expression, alternative splicing, and protein stability. Acts as a disease resistance protein involved in resistance to fungal and bacterial pathogens, including R.solanacearum, P.syringae pv. tomato and C.higginsianum. In presence of RRS1, elicites an EDS1-dependent hypersensitive response. This chain is Disease resistance protein RPS4, found in Arabidopsis thaliana (Mouse-ear cress).